Consider the following 85-residue polypeptide: Beta-insect depressant toxin BmKITb (85 aa).

Positions 1-21 (MKLFLLLVISASMLIDGLVNA) are cleaved as a signal peptide. The region spanning 22-82 (DGYIRGSNGC…TWKSESNTCG (61 aa)) is the LCN-type CS-alpha/beta domain. Disulfide bonds link Cys31/Cys81, Cys35/Cys56, Cys42/Cys63, and Cys46/Cys65. A Glycine amide modification is found at Gly82.

As to expression, expressed by the venom gland.

It is found in the secreted. Its function is as follows. Depressant insect beta-toxins cause a transient contraction paralysis followed by a slow flaccid paralysis. They bind voltage-independently at site-4 of sodium channels (Nav) and shift the voltage of activation toward more negative potentials thereby affecting sodium channel activation and promoting spontaneous and repetitive firing. However, this toxin has some characteristics of excitatory toxins such as bursts of activity after the membrane has been hyperpolarized. This toxin is active only on insects. The chain is Beta-insect depressant toxin BmKITb from Olivierus martensii (Manchurian scorpion).